A 467-amino-acid polypeptide reads, in one-letter code: Tyrosine phenol-lyase (467 aa).

Position 268 is an N6-(pyridoxal phosphate)lysine (Lys268).

Belongs to the beta-eliminating lyase family. Homotetramer. Pyridoxal 5'-phosphate serves as cofactor.

It carries out the reaction L-tyrosine + H2O = phenol + pyruvate + NH4(+). The polypeptide is Tyrosine phenol-lyase (Nostoc punctiforme (strain ATCC 29133 / PCC 73102)).